A 306-amino-acid chain; its full sequence is WUSCHEL-related homeobox 13 (306 aa).

A compositionally biased stretch (pro residues) spans 1–11 (MMALGVPPPPS). 3 disordered regions span residues 1-20 (MMAL…GPLR), 103-142 (PRSH…PRPE), and 190-276 (SRSK…ARAT). Residues 126-142 (GEERVPDPKPRRNPRPE) show a composition bias toward basic and acidic residues. Positions 132-196 (DPKPRRNPRP…NRKSRSKNKL (65 aa)) form a DNA-binding region, homeobox; WUS-type. The segment covering 199–210 (GGTGRAGLGLGG) has biased composition (gly residues). Residues 231–242 (FTPPPILPPQPV) are compositionally biased toward pro residues. Positions 243-270 (QPQQQLVSPVAAPTSLSSSSSDRSSGSS) are enriched in low complexity.

It belongs to the WUS homeobox family.

It localises to the nucleus. Its function is as follows. Transcription factor which may be involved in developmental processes. The polypeptide is WUSCHEL-related homeobox 13 (WOX13) (Oryza sativa subsp. japonica (Rice)).